The primary structure comprises 112 residues: Head virion protein G6P (112 aa).

Helical transmembrane passes span 3–23 (VLLG…TLFG), 36–56 (IAIA…ILVG), and 80–100 (NALP…IFDV).

The protein belongs to the inovirus G6P protein family. Interacts with G3P; this interaction is required for proper integration of G3P and G6P into the virion.

The protein localises to the virion. Its subcellular location is the host membrane. Its function is as follows. Plays essential roles both in the entry of the viral genome into the bacterial host and in budding process. The formation of the G3P-G6P complex termed adsorption complex is essential for correct termination of filamentous phage assembly. The protein is Head virion protein G6P (VI) of Escherichia coli (Bacteriophage f1).